The chain runs to 128 residues: Glycine cleavage system H protein (128 aa).

The region spanning 22–104 (TVLVGITDYA…YGEGWIFRLK (83 aa)) is the Lipoyl-binding domain. Lys63 carries the N6-lipoyllysine modification.

The protein belongs to the GcvH family. In terms of assembly, the glycine cleavage system is composed of four proteins: P, T, L and H. Monomer. (R)-lipoate serves as cofactor.

Its function is as follows. The glycine cleavage system catalyzes the degradation of glycine. The H protein shuttles the methylamine group of glycine from the P protein to the T protein. This is Glycine cleavage system H protein from Thermus thermophilus (strain ATCC 27634 / DSM 579 / HB8).